The primary structure comprises 213 residues: uncharacterized protein (213 aa).

The N-terminal stretch at 1-19 (MKKVLLLLFVLTIGLALSA) is a signal peptide. Cysteine 20 is lipidated: N-palmitoyl cysteine. Cysteine 20 carries the S-diacylglycerol cysteine lipid modification. Positions 20–62 (CSQSSDASEKEKPKEKKSQEELEKELDKELKKGGEPKTKKDDQ) are disordered. The segment covering 26-62 (ASEKEKPKEKKSQEELEKELDKELKKGGEPKTKKDDQ) has biased composition (basic and acidic residues).

The protein localises to the cell membrane. This is an uncharacterized protein from Bacillus subtilis (strain 168).